Here is a 323-residue protein sequence, read N- to C-terminus: Lipoyl synthase (323 aa).

Residues Cys-53, Cys-58, Cys-64, Cys-79, Cys-83, Cys-86, and Ser-293 each coordinate [4Fe-4S] cluster. The region spanning 65 to 282 (WTKKQATVMI…AATARAKGFS (218 aa)) is the Radical SAM core domain.

Belongs to the radical SAM superfamily. Lipoyl synthase family. Requires [4Fe-4S] cluster as cofactor.

Its subcellular location is the cytoplasm. It catalyses the reaction [[Fe-S] cluster scaffold protein carrying a second [4Fe-4S](2+) cluster] + N(6)-octanoyl-L-lysyl-[protein] + 2 oxidized [2Fe-2S]-[ferredoxin] + 2 S-adenosyl-L-methionine + 4 H(+) = [[Fe-S] cluster scaffold protein] + N(6)-[(R)-dihydrolipoyl]-L-lysyl-[protein] + 4 Fe(3+) + 2 hydrogen sulfide + 2 5'-deoxyadenosine + 2 L-methionine + 2 reduced [2Fe-2S]-[ferredoxin]. It participates in protein modification; protein lipoylation via endogenous pathway; protein N(6)-(lipoyl)lysine from octanoyl-[acyl-carrier-protein]: step 2/2. Functionally, catalyzes the radical-mediated insertion of two sulfur atoms into the C-6 and C-8 positions of the octanoyl moiety bound to the lipoyl domains of lipoate-dependent enzymes, thereby converting the octanoylated domains into lipoylated derivatives. The sequence is that of Lipoyl synthase from Zymomonas mobilis subsp. mobilis (strain ATCC 31821 / ZM4 / CP4).